Here is a 33-residue protein sequence, read N- to C-terminus: Gastrin (33 aa).

Gln-1 is subject to Pyrrolidone carboxylic acid. Phenylalanine amide is present on Phe-33.

Belongs to the gastrin/cholecystokinin family.

It localises to the secreted. Its function is as follows. Gastrin stimulates the stomach mucosa to produce and secrete hydrochloric acid and the pancreas to secrete its digestive enzymes. It also stimulates smooth muscle contraction and increases blood circulation and water secretion in the stomach and intestine. This is Gastrin (GAST) from Cavia porcellus (Guinea pig).